The sequence spans 255 residues: Isoprenyl transferase (255 aa).

Aspartate 35 is an active-site residue. Aspartate 35 serves as a coordination point for Mg(2+). Substrate contacts are provided by residues 36-39 (GNGR), tryptophan 40, arginine 48, histidine 52, and 80-82 (STE). Asparagine 83 (proton acceptor) is an active-site residue. Substrate-binding positions include tryptophan 84, arginine 86, arginine 203, and 209 to 211 (RIS). A Mg(2+)-binding site is contributed by glutamate 222.

The protein belongs to the UPP synthase family. In terms of assembly, homodimer. Mg(2+) serves as cofactor.

Its function is as follows. Catalyzes the condensation of isopentenyl diphosphate (IPP) with allylic pyrophosphates generating different type of terpenoids. This chain is Isoprenyl transferase, found in Clostridium tetani (strain Massachusetts / E88).